A 379-amino-acid polypeptide reads, in one-letter code: Cytochrome b (379 aa).

4 consecutive transmembrane segments (helical) span residues 34–54, 78–99, 114–134, and 179–199; these read FGSLLGICLITQILTGLLLAM, WFIRNLHANGASFFFICIYLHI, WNTGVILLLTLMATAFVGYVL, and FFALHFLLPFVIAGITLVHLT. Heme b is bound by residues His84 and His98. Heme b is bound by residues His183 and His197. Residue His202 coordinates a ubiquinone. Transmembrane regions (helical) follow at residues 227–247, 289–309, 321–341, and 348–368; these read LKDILGFTLMFIPLLSLAFFS, LGGVLALAASVLILFLIPLLH, LSQLLFWFLVANLLILTWIGS, and FIIIGQVASFTYFLILLVLFP.

Belongs to the cytochrome b family. As to quaternary structure, the cytochrome bc1 complex contains 11 subunits: 3 respiratory subunits (MT-CYB, CYC1 and UQCRFS1), 2 core proteins (UQCRC1 and UQCRC2) and 6 low-molecular weight proteins (UQCRH/QCR6, UQCRB/QCR7, UQCRQ/QCR8, UQCR10/QCR9, UQCR11/QCR10 and a cleavage product of UQCRFS1). This cytochrome bc1 complex then forms a dimer. Requires heme b as cofactor.

The protein resides in the mitochondrion inner membrane. In terms of biological role, component of the ubiquinol-cytochrome c reductase complex (complex III or cytochrome b-c1 complex) that is part of the mitochondrial respiratory chain. The b-c1 complex mediates electron transfer from ubiquinol to cytochrome c. Contributes to the generation of a proton gradient across the mitochondrial membrane that is then used for ATP synthesis. This is Cytochrome b (MT-CYB) from Struthio camelus (Common ostrich).